We begin with the raw amino-acid sequence, 544 residues long: E3 ubiquitin-protein ligase makorin-3 (544 aa).

2 disordered regions span residues 1–46 (MEES…VSSA) and 117–144 (DLSG…KMAT). Composition is skewed to low complexity over residues 9 to 19 (EAHAAAGAEAG) and 36 to 46 (AAGASAGVSSA). 2 C3H1-type zinc fingers span residues 92-119 (WTKQ…HDLS) and 274-301 (PMPL…HGEI). Residues 302 to 329 (CDMCGQQALHPWDAAQQEAHRRACVEAH) form a makorin-type Cys-His region. The RING-type zinc-finger motif lies at 347–401 (CGICMEVVYEKADPSDRRFGILFSCNHTYCLRCIRRWRSATQFENRISKSCPQCR). The segment at 430 to 459 (GMSQKACRYFAGGLGHCPFGEFCFYKHEYP) adopts a C3H1-type 3 zinc-finger fold.

Mainly expressed in mouse brain and reproductive system including testis and ovary. Ubiquitously detected at low levels throughout the entire embryo, but expression is highest in the ventricular layers of the brain.

The protein localises to the nucleus. The catalysed reaction is S-ubiquitinyl-[E2 ubiquitin-conjugating enzyme]-L-cysteine + [acceptor protein]-L-lysine = [E2 ubiquitin-conjugating enzyme]-L-cysteine + N(6)-ubiquitinyl-[acceptor protein]-L-lysine.. It functions in the pathway protein modification; protein ubiquitination. Its function is as follows. E3 ubiquitin ligase catalyzing the covalent attachment of ubiquitin moieties onto substrate proteins. Acts as a key developmental timer that helps ensure puberty begins at the appropriate age, by inhibiting premature activation of the reproductive hormone cascade. Epigenetically regulates GNRH1 transcription by disrupting the binding of methyl-DNA binding protein 3/MBD3 to the promoter of GNRH1. Mechanistically, mediates the non-proteolytic ubiquitination of MBD3 at multiple sites with 'Lys27' ubiquitin linkages and thereby regulates the methylation status of the genome, including GNRH1 promoter. Modulates the stability and translation of GNRH1 mRNA by mediating the non-proteolytic ubiquitination of PABP family members PABPC1, PABPC3 and PABPC4 at multiple sites. Also participates in the maintenance of genomic and epigenomic stability by regulating the abundance of APEX2 via 'Lys-48'-linked ubiquitination. The chain is E3 ubiquitin-protein ligase makorin-3 (Mkrn3) from Mus musculus (Mouse).